A 515-amino-acid chain; its full sequence is MSVPTFDDLSFYSNDQELTKSRYLKLVEIFQSNFPNASIDFFARSPGRVNLIGDHIDYNFFPVLPMAISADVIVAVNVNDEPEIVITHTDSKNFAKETIPLTNNNDGFEIDSQHHSWANYFKCALIVANNYLTEQNLKGQLKGMKLTFDGNVPTGGGLSSSAAFCVASTLAILHANGVKDITKADLTRITVVCEHYVGVNTGGMDQCASVYGEPDKALLIQFKPKLIGKPFKFPVENLTFVITNSLQVSNKHETAPIHYNLRVVEMAIAADVLVKKLNLGTLVPQDSNIGTSSLRGVMDAVFNTCKWDGNDIDVGIDQLKKMIAIVETELNNNQEGYTVDQCLTVLDLSLDEFKSKYLQAYPVKFDVLKLYQRAKHVYQESLRVLETLKLLSTTQTSSNSKDDDESFLVKFGELMNQSQSDLDKLNESSNDKLNKICSIALQNGSYGSRITGAGWGGSIVHLTTLDKSKQLIQGLIKNYYQLEFPSIKLDELLNDAIIDSKPSMGSCIVTTKFLQ.

Residues Arg48, Asp54, His55, and Asp57 each contribute to the alpha-D-galactose site. Positions 155, 157, 159, and 160 each coordinate ATP. Residue Asp205 coordinates alpha-D-galactose. Asp205 serves as the catalytic Proton acceptor. The ATP site is built by Ser249, Asn250, and Lys251. Tyr259 provides a ligand contact to alpha-D-galactose.

Belongs to the GHMP kinase family. GalK subfamily.

The enzyme catalyses alpha-D-galactose + ATP = alpha-D-galactose 1-phosphate + ADP + H(+). It participates in carbohydrate metabolism; galactose metabolism. Galactokinase is a key enzyme in the galactose metabolism where it catalyzes the conversion of alpha-D-galactose to galactose 1-phosphate. Can also induce the transcription of the gal genes in response to the organism being challenged with galactose as the sole source of carbon. In Candida albicans (Yeast), this protein is Galactokinase.